The sequence spans 180 residues: Major urinary protein 1 (180 aa).

An N-terminal signal peptide occupies residues 1–18; sequence MKMLLLLCLGLTLVCVHA. C82 and C175 are joined by a disulfide.

It belongs to the calycin superfamily. Lipocalin family. Abundant in the urine of adult male mice but absent from that of females.

Its subcellular location is the secreted. Its function is as follows. Binds pheromones that are released from drying urine of males. These pheromones affect the sexual behavior of females. This Mus musculus (Mouse) protein is Major urinary protein 1 (Mup1).